The chain runs to 2682 residues: 3-methylorcinaldehyde synthase (2682 aa).

The N-terminal acylcarrier protein transacylase domain (SAT) stretch occupies residues 111 to 272 (LIPLVVIEQL…TEITLYGAFH (162 aa)). Cys-154 functions as the Nucleophile; for transacylase activity in the catalytic mechanism. His-272 (proton donor/acceptor; for transacylase activity) is an active-site residue. Residues 401–826 (ESDIAVIGMA…GSNASMIVMQ (426 aa)) form the Ketosynthase family 3 (KS3) domain. Residues Cys-573, His-708, and His-749 each act as for beta-ketoacyl synthase activity in the active site. The malonyl-CoA:ACP transacylase (MAT) domain stretch occupies residues 947 to 1237 (FGGQVSTHIG…ITAMTSRALD (291 aa)). The segment at 1339 to 1468 (LTFVGFQDSS…GKIKFTNARD (130 aa)) is N-terminal hotdog fold. Residues 1339–1651 (LTFVGFQDSS…YVKIPKLSMQ (313 aa)) form the PKS/mFAS DH domain. Positions 1367 to 1649 (LLLGHMTIQT…IAYVKIPKLS (283 aa)) are product template (PT) domain. Catalysis depends on His-1371, which acts as the Proton acceptor; for dehydratase activity. Residues 1496 to 1651 (VDEVLANRSI…YVKIPKLSMQ (156 aa)) form a C-terminal hotdog fold region. Asp-1555 serves as the catalytic Proton donor; for dehydratase activity. A Carrier domain is found at 1723 to 1797 (ENITERVKAV…DLMKVVTGVV (75 aa)). The residue at position 1757 (Ser-1757) is an O-(pantetheine 4'-phosphoryl)serine. The tract at residues 2021-2211 (EWPLNQVMYT…AGYGHVYWTE (191 aa)) is methyltransferase domain. The NADPH-binding (R) domain stretch occupies residues 2303 to 2548 (VTGATGGLGA…LGWTPADAIA (246 aa)).

It participates in secondary metabolite biosynthesis; terpenoid biosynthesis. Non-reducing polyketide synthase; part of the gene cluster that mediates the biosynthesis of eupenifeldin, a bistropolone meroterpenoid that acts as an antitumor agent. The first step of eupenifeldin biosynthesis is the biosynthesis of 3-methylorcinaldehyde performed by the non-reducing polyketide synthase eupA. Oxidative dearomatization of 3-methylorcinaldehyde likely catalyzed by the FAD-dependent monooxygenase eupB is followed by oxidative ring expansion by the 2-oxoglutarate-dependent dioxygenase eupC to provide the first tropolone metabolite, tropolone stipitaldehyde. In parallel, generation of sesquiterpene alpha-humulene from farnesylpyrophosphate (FPP) is catalyzed by the terpene cyclase eupE. The cytochrome P450 monooxygenase eupD then hydroxylates humulene to humulenol. The putative Diels-Alderase eupF probably catalyzes the formation of the tropolone-humulene skeleton by linking humulenol and the polyketide moiety. The short-chain dehydrogenase/reductase eupG and the flavin-dependent monooxygenase eupH are also essential for eupenifeldin biosynthesis and are likely the additional decorating enzymes of the tropolone-humulene skeleton to produce final eupenifeldin or derivatives. In Phoma sp, this protein is 3-methylorcinaldehyde synthase.